Here is a 368-residue protein sequence, read N- to C-terminus: Biglycan (368 aa).

Positions 1-16 (MKVLLLLCSCILVIHA) are cleaved as a signal peptide. A propeptide spanning residues 17 to 37 (LPFEQRGFWDFSMDDGMAMMK) is cleaved from the precursor. 2 disulfide bridges follow: cysteine 63/cysteine 69 and cysteine 67/cysteine 76. 12 LRR repeats span residues 82–102 (TSIP…NNKI), 103–126 (TEIK…NNKI), 127–150 (SKIN…KNNL), 151–171 (EEIP…ENKI), 172–195 (KKVP…GNPL), 196–220 (ENGG…EAKL), 221–241 (SGIP…NNKI), 242–265 (QAIE…HNNI), 266–289 (RMIE…NNKL), 290–312 (SKVP…SNNI), 313–342 (TQVG…NNPV), and 343–368 (PYWE…NYRK). 2 N-linked (GlcNAc...) asparagine glycosylation sites follow: asparagine 270 and asparagine 311. An intrachain disulfide couples cysteine 321 to cysteine 354.

The protein belongs to the small leucine-rich proteoglycan (SLRP) family. SLRP class I subfamily.

The protein localises to the secreted. It is found in the extracellular space. It localises to the extracellular matrix. Its function is as follows. May be involved in collagen fiber assembly. The chain is Biglycan (bgn) from Xenopus laevis (African clawed frog).